The following is a 302-amino-acid chain: Sulfate adenylyltransferase subunit 2 (302 aa).

The protein belongs to the PAPS reductase family. CysD subfamily. As to quaternary structure, heterodimer composed of CysD, the smaller subunit, and CysN.

It catalyses the reaction sulfate + ATP + H(+) = adenosine 5'-phosphosulfate + diphosphate. It participates in sulfur metabolism; hydrogen sulfide biosynthesis; sulfite from sulfate: step 1/3. Its function is as follows. With CysN forms the ATP sulfurylase (ATPS) that catalyzes the adenylation of sulfate producing adenosine 5'-phosphosulfate (APS) and diphosphate, the first enzymatic step in sulfur assimilation pathway. APS synthesis involves the formation of a high-energy phosphoric-sulfuric acid anhydride bond driven by GTP hydrolysis by CysN coupled to ATP hydrolysis by CysD. The chain is Sulfate adenylyltransferase subunit 2 from Klebsiella pneumoniae (strain 342).